The sequence spans 587 residues: Xyloglucan-specific endo-beta-1,4-glucanase BoGH9A (587 aa).

An N-terminal signal peptide occupies residues 1–19 (MKIVRYIALFGILSGLAVA). Cys20 is lipidated: N-palmitoyl cysteine. Residue Cys20 is the site of S-diacylglycerol cysteine attachment. The Nucleophile role is filled by Asp185. Active-site residues include His511 and Asp553. Glu562 (proton donor) is an active-site residue.

It belongs to the glycosyl hydrolase 9 (cellulase E) family.

The protein localises to the cell outer membrane. It catalyses the reaction xyloglucan + H2O = xyloglucan oligosaccharides.. It functions in the pathway glucan metabolism; xyloglucan degradation. In terms of biological role, catalyzes endohydrolysis of 1,4-beta-D-glucosidic linkages in xyloglucan with retention of the beta-configuration of the glycosyl residues in xyloglucan degradation. Cleaves the backbone of the 3 major types of natural xyloglucans (seed galactoxyloglucan from tamarind kernel, dicot fucogalactoxyloglucan from lettuce leaves, and solanaceous arabinogalactoxyloglucan from tomato fruit), to produce xyloglucan oligosaccharides. May be superfluous in xyloglucan degradation compared to BoGH5A (AC A7LXT7), the other Xyloglucan-specific endo-beta-1,4-glucanase. This Bacteroides ovatus (strain ATCC 8483 / DSM 1896 / JCM 5824 / BCRC 10623 / CCUG 4943 / NCTC 11153) protein is Xyloglucan-specific endo-beta-1,4-glucanase BoGH9A.